Consider the following 41-residue polypeptide: Trypsin inhibitor (41 aa).

Cystine bridges form between Cys15-Cys26, Cys17-Cys24, and Cys29-Cys37.

Has two active sites that simultaneously bind and inhibit trypsin. The sequence is that of Trypsin inhibitor from Trichosanthes kirilowii (Chinese snake gourd).